The chain runs to 449 residues: 3-phosphoshikimate 1-carboxyvinyltransferase (449 aa).

The disordered stretch occupies residues 1 to 23 (MSHSASPKPATARRSEALTGEIR). 3-phosphoshikimate is bound by residues K28, S29, and R33. Residue K28 coordinates phosphoenolpyruvate. Phosphoenolpyruvate is bound by residues G100 and R128. 3-phosphoshikimate-binding residues include S173, Q175, D326, and K353. Phosphoenolpyruvate is bound at residue Q175. The Proton acceptor role is filled by D326. R357 and R402 together coordinate phosphoenolpyruvate.

Belongs to the EPSP synthase family. In terms of assembly, monomer.

The protein localises to the cytoplasm. It catalyses the reaction 3-phosphoshikimate + phosphoenolpyruvate = 5-O-(1-carboxyvinyl)-3-phosphoshikimate + phosphate. It functions in the pathway metabolic intermediate biosynthesis; chorismate biosynthesis; chorismate from D-erythrose 4-phosphate and phosphoenolpyruvate: step 6/7. In terms of biological role, catalyzes the transfer of the enolpyruvyl moiety of phosphoenolpyruvate (PEP) to the 5-hydroxyl of shikimate-3-phosphate (S3P) to produce enolpyruvyl shikimate-3-phosphate and inorganic phosphate. This Pseudomonas sp. (strain PG2982) protein is 3-phosphoshikimate 1-carboxyvinyltransferase.